We begin with the raw amino-acid sequence, 636 residues long: 1,4-alpha-glucan branching enzyme GlgB (636 aa).

Asp-309 (nucleophile) is an active-site residue. The Proton donor role is filled by Glu-362.

This sequence belongs to the glycosyl hydrolase 13 family. GlgB subfamily. Monomer.

The enzyme catalyses Transfers a segment of a (1-&gt;4)-alpha-D-glucan chain to a primary hydroxy group in a similar glucan chain.. It functions in the pathway glycan biosynthesis; glycogen biosynthesis. Its function is as follows. Catalyzes the formation of the alpha-1,6-glucosidic linkages in glycogen by scission of a 1,4-alpha-linked oligosaccharide from growing alpha-1,4-glucan chains and the subsequent attachment of the oligosaccharide to the alpha-1,6 position. This Aromatoleum aromaticum (strain DSM 19018 / LMG 30748 / EbN1) (Azoarcus sp. (strain EbN1)) protein is 1,4-alpha-glucan branching enzyme GlgB.